Here is a 293-residue protein sequence, read N- to C-terminus: Pantothenate synthetase (293 aa).

30–37 (MGYLHKGH) provides a ligand contact to ATP. Catalysis depends on histidine 37, which acts as the Proton donor. Glutamine 61 is a (R)-pantoate binding site. Glutamine 61 contributes to the beta-alanine binding site. 147–150 (GEKD) contributes to the ATP binding site. Position 153 (glutamine 153) interacts with (R)-pantoate. ATP contacts are provided by residues valine 176 and 184-187 (CSSR).

Belongs to the pantothenate synthetase family. Homodimer.

It localises to the cytoplasm. It catalyses the reaction (R)-pantoate + beta-alanine + ATP = (R)-pantothenate + AMP + diphosphate + H(+). The protein operates within cofactor biosynthesis; (R)-pantothenate biosynthesis; (R)-pantothenate from (R)-pantoate and beta-alanine: step 1/1. Its function is as follows. Catalyzes the condensation of pantoate with beta-alanine in an ATP-dependent reaction via a pantoyl-adenylate intermediate. The protein is Pantothenate synthetase of Brucella melitensis biotype 2 (strain ATCC 23457).